Here is an 827-residue protein sequence, read N- to C-terminus: Glycerol-3-phosphate acyltransferase (827 aa).

The short motif at 309–314 is the HXXXXD motif element; it reads CHRSHI.

This sequence belongs to the GPAT/DAPAT family.

The protein localises to the cell inner membrane. It catalyses the reaction sn-glycerol 3-phosphate + an acyl-CoA = a 1-acyl-sn-glycero-3-phosphate + CoA. It participates in phospholipid metabolism; CDP-diacylglycerol biosynthesis; CDP-diacylglycerol from sn-glycerol 3-phosphate: step 1/3. The sequence is that of Glycerol-3-phosphate acyltransferase from Ectopseudomonas mendocina (strain ymp) (Pseudomonas mendocina).